The primary structure comprises 524 residues: Probable endopeptidase p60 (524 aa).

Residues 1 to 27 (MNMKKATIAATAGIAVTAFAAPTIASA) form the signal peptide. The LysM 1 domain maps to 28-71 (STVVVEAGDTLWGIAQSKGTTVDALKKANNLTSDKIVPGQKLQV). One can recognise an SH3b domain in the interval 78 to 142 (KTEKSVSATW…VNGKYLGDAV (65 aa)). The segment at 150-188 (QEVKQETTKQTAPAAETKTEVKQSTPAPTAPKAAETKTA) is disordered. Low complexity predominate over residues 174–188 (TPAPTAPKAAETKTA). Residues 196–239 (TTHTVKSGDTIWALSVKYGASVQDLMSWNNLSSSSIYVGQKIAV) enclose the LysM 2 domain. Over residues 272 to 299 (NTNTTVKKEVTTQTQTNTTKAPAQAAKP) the composition is skewed to low complexity. Residues 272–313 (NTNTTVKKEVTTQTQTNTTKAPAQAAKPAPAPAPAPTVNTNA) are disordered. The LysM 3 domain maps to 314-357 (STYTVKSGDSLSKIANTFGTSVSKIKALNNLTSDNLQVGTVLKV). The segment at 360–408 (TVPTTNTNNNSNTTAPTTNTSNNNTSSNTSTPSKNTNTNTNQGSSNSAS) is disordered. The span at 362 to 408 (PTTNTNNNSNTTAPTTNTSNNNTSSNTSTPSKNTNTNTNQGSSNSAS) shows a compositional bias: low complexity. The region spanning 406–524 (SASASALIAE…GKYLVGFGRV (119 aa)) is the NlpC/P60 domain. Cys-436 serves as the catalytic Nucleophile. The active-site Proton acceptor is His-486. Asn-498 is a catalytic residue.

Belongs to the peptidase C40 family.

In terms of biological role, this major extracellular protein may be involved in the invasion of non-professional phagocytic cells by Listeria. The protein is Probable endopeptidase p60 (iap) of Listeria welshimeri.